The primary structure comprises 84 residues: MTETKKSEELTFEEAMKGLEGIVAKLEEGDVPLEQAINYFQEGMALSKMCHEKLQHVEKQMDFILKDNGELAPFSVQEEDEGDK.

It belongs to the XseB family. As to quaternary structure, heterooligomer composed of large and small subunits.

The protein resides in the cytoplasm. The enzyme catalyses Exonucleolytic cleavage in either 5'- to 3'- or 3'- to 5'-direction to yield nucleoside 5'-phosphates.. Bidirectionally degrades single-stranded DNA into large acid-insoluble oligonucleotides, which are then degraded further into small acid-soluble oligonucleotides. In Bacillus velezensis (strain DSM 23117 / BGSC 10A6 / LMG 26770 / FZB42) (Bacillus amyloliquefaciens subsp. plantarum), this protein is Exodeoxyribonuclease 7 small subunit.